Consider the following 532-residue polypeptide: Autoinducer-2 kinase (532 aa).

This sequence belongs to the FGGY kinase family.

The protein localises to the cytoplasm. The catalysed reaction is (S)-4,5-dihydroxypentane-2,3-dione + ATP = (2S)-2-hydroxy-3,4-dioxopentyl phosphate + ADP + H(+). In terms of biological role, catalyzes the phosphorylation of autoinducer-2 (AI-2) to phospho-AI-2, which subsequently inactivates the transcriptional regulator LsrR and leads to the transcription of the lsr operon. Phosphorylates the ring-open form of (S)-4,5-dihydroxypentane-2,3-dione (DPD), which is the precursor to all AI-2 signaling molecules, at the C5 position. The polypeptide is Autoinducer-2 kinase (Klebsiella pneumoniae subsp. pneumoniae (strain ATCC 700721 / MGH 78578)).